A 224-amino-acid polypeptide reads, in one-letter code: Lipoprotein-releasing system ATP-binding protein LolD (224 aa).

The 220-residue stretch at 5–224 (LEILDVSKCY…SLSGGMLTEL (220 aa)) folds into the ABC transporter domain. Residue 40–47 (GSSGSGKS) participates in ATP binding.

Belongs to the ABC transporter superfamily. Lipoprotein translocase (TC 3.A.1.125) family. The complex is composed of two ATP-binding proteins (LolD) and two transmembrane proteins (LolC and LolE).

The protein localises to the cell inner membrane. In terms of biological role, part of the ABC transporter complex LolCDE involved in the translocation of mature outer membrane-directed lipoproteins, from the inner membrane to the periplasmic chaperone, LolA. Responsible for the formation of the LolA-lipoprotein complex in an ATP-dependent manner. This is Lipoprotein-releasing system ATP-binding protein LolD from Anaplasma marginale (strain St. Maries).